Consider the following 383-residue polypeptide: 8-amino-7-oxononanoate synthase (383 aa).

Arginine 21 serves as a coordination point for substrate. Glycine 108–tyrosine 109 contacts pyridoxal 5'-phosphate. Histidine 133 lines the substrate pocket. 3 residues coordinate pyridoxal 5'-phosphate: serine 179, histidine 207, and threonine 233. Lysine 236 carries the post-translational modification N6-(pyridoxal phosphate)lysine. Substrate is bound at residue threonine 350.

This sequence belongs to the class-II pyridoxal-phosphate-dependent aminotransferase family. BioF subfamily. In terms of assembly, homodimer. The cofactor is pyridoxal 5'-phosphate.

The enzyme catalyses 6-carboxyhexanoyl-[ACP] + L-alanine + H(+) = (8S)-8-amino-7-oxononanoate + holo-[ACP] + CO2. It participates in cofactor biosynthesis; biotin biosynthesis. Its function is as follows. Catalyzes the decarboxylative condensation of pimeloyl-[acyl-carrier protein] and L-alanine to produce 8-amino-7-oxononanoate (AON), [acyl-carrier protein], and carbon dioxide. This Yersinia pseudotuberculosis serotype IB (strain PB1/+) protein is 8-amino-7-oxononanoate synthase.